Consider the following 430-residue polypeptide: MSQGLIETTTIVETRELGHQIHASLLEQLKLQQEELLQQQRDLFFQEQQLQQQANHPVSNNGNTWSFTQGLVIGQISVIFIIIVFVKFFVFADSSSHIPTKPGLDGATGVIVKRNKKKQHLNGQFANDDGNEDDISLNSNESKISSILEKTYYDVNNHASESLDWFNVLVAQTISQLRSEALLKDNIYHSLNNFLTNAKLPDFIDTINLTEIDIGDDFPIFSNCRIKYGEDLKRLEAKIDVDLSDTLTLGIATKLLLNQPRPLTAVLPVSLTVSIVRFSGCLTVSLINTKDIDLKNFNKASNMNGYSKENGSADSASDNDEDEDDGGTALMFSFSPDYRLEFIVKSLIGSRAKLQDVPKISSLIENQLRTWFIERCVEPRFQVVRLPSLWPRTKNTREPVIKKTPTTSTTINGTSAATVTTPGEFVNSNI.

Over 1 to 70 the chain is Lumenal; that stretch reads MSQGLIETTT…NGNTWSFTQG (70 aa). A helical membrane pass occupies residues 71-91; that stretch reads LVIGQISVIFIIIVFVKFFVF. Topologically, residues 92-430 are cytoplasmic; sequence ADSSSHIPTK…TPGEFVNSNI (339 aa). In terms of domain architecture, SMP-LTD spans 159-387; sequence ASESLDWFNV…EPRFQVVRLP (229 aa). Positions 305-326 are disordered; sequence GYSKENGSADSASDNDEDEDDG. Residues 317-326 show a composition bias toward acidic residues; sequence SDNDEDEDDG.

It belongs to the MMM1 family. As to quaternary structure, homodimer. Component of the ER-mitochondria encounter structure (ERMES) or MDM complex, composed of MMM1, MDM10, MDM12 and MDM34. An MMM1 homodimer associates with one molecule of MDM12 on each side in a pairwise head-to-tail manner, and the SMP-LTD domains of MMM1 and MDM12 generate a continuous hydrophobic tunnel for phospholipid trafficking.

The protein resides in the endoplasmic reticulum membrane. Its function is as follows. Component of the ERMES/MDM complex, which serves as a molecular tether to connect the endoplasmic reticulum (ER) and mitochondria. Components of this complex are involved in the control of mitochondrial shape and protein biogenesis, and function in nonvesicular lipid trafficking between the ER and mitochondria. The MDM12-MMM1 subcomplex functions in the major beta-barrel assembly pathway that is responsible for biogenesis of all outer membrane beta-barrel proteins, and acts in a late step after the SAM complex. The MDM10-MDM12-MMM1 subcomplex further acts in the TOM40-specific pathway after the action of the MDM12-MMM1 complex. Essential for establishing and maintaining the structure of mitochondria and maintenance of mtDNA nucleoids. The chain is Maintenance of mitochondrial morphology protein 1 from Candida dubliniensis (strain CD36 / ATCC MYA-646 / CBS 7987 / NCPF 3949 / NRRL Y-17841) (Yeast).